Here is a 239-residue protein sequence, read N- to C-terminus: Retrotransposon Gag-like protein 6 (239 aa).

The stretch at 29 to 69 (LTSLRLTNSALRREASTLRAEKANLTNMLESVMAELTLLRT) forms a coiled coil. Residues 82–94 (PISSITSNGTRPM) show a composition bias toward polar residues. Disordered regions lie at residues 82-106 (PISS…EPFS) and 214-239 (TGPC…ARNL). Residues 228–239 (PAPALPARARNL) are compositionally biased toward low complexity.

This sequence belongs to the LDOC1 family.

In Homo sapiens (Human), this protein is Retrotransposon Gag-like protein 6.